The chain runs to 95 residues: Nickel and cobalt resistance protein CnrY (95 aa).

Residues 1–45 are Cytoplasmic-facing; the sequence is MADVEEWLTHARKVTQEASIGVDVTSIQECISAEPAQRVLVARRD. The helical transmembrane segment at 46–68 threads the bilayer; it reads AWRAICCAAFAALVAFAAINRVA. Residues 69-95 are Periplasmic-facing; it reads TIMLEKPAPTWVATPSAASPFGLLIGK.

This sequence to A.xylosoxydans NccY.

Its subcellular location is the cell inner membrane. Its function is as follows. Nickel and cobalt resistance proteins CnrA, CnrB, CnrC CnrH and CnrR may be involved in the regulation of CNR. CnrH alone is able to activate cnr expression, and both CnrY and CrnX are needed for nickel induction of CnrH. In the absence of wild-type CnrY (due either to a frameshift, PubMed:10671463 or absence of the transcript, PubMed:10671464), nickel and cobalt resistance is constitutive, indicating that CrnY may act as a repressor or an anti-sigma factor. The chain is Nickel and cobalt resistance protein CnrY (cnrY) from Cupriavidus metallidurans (strain ATCC 43123 / DSM 2839 / NBRC 102507 / CH34) (Ralstonia metallidurans).